The following is a 239-amino-acid chain: MGNRRAPCCDKSQVKRGPWSDEESERLRSFILKNGHQNWRSLPKLAGLMRCGKSCRLRWINYLRPGLKRGNFTKEEEDTIIHLHQAYGNKWSKIASNFPGRTDNEIKNVWNTHLKKRLVKRSISSSSSDVTNHSVSSTSSSSSSISSVLQDVIIKSERPNQEEEFGEILVEQMACGFEVDAPQSLECLFDDSQVPPPISKPDSLQTHGKSSDHEFWSRLIEPGFDDYNEWLIFLDNQTC.

2 consecutive HTH myb-type domains span residues 11–63 (KSQV…INYL) and 64–118 (RPGL…KKRL). 2 DNA-binding regions (H-T-H motif) span residues 39–63 (WRSL…INYL) and 91–114 (WSKI…NTHL).

As to expression, expressed in cauline leaves and siliques.

The protein localises to the nucleus. Its function is as follows. Involved in metal ions homeostasis, including iron ions (Fe) acquisition, via the regulation of NAS4 and NAS2 genes expression. Necessary for plant survival in alkaline soil where iron availability is greatly restricted. Triggers tolerance to nickel (Ni) and zinc (Zn) ions. This chain is Transcription factor MYB10, found in Arabidopsis thaliana (Mouse-ear cress).